A 120-amino-acid chain; its full sequence is Large ribosomal subunit protein bL20 (120 aa).

The protein belongs to the bacterial ribosomal protein bL20 family.

Binds directly to 23S ribosomal RNA and is necessary for the in vitro assembly process of the 50S ribosomal subunit. It is not involved in the protein synthesizing functions of that subunit. This is Large ribosomal subunit protein bL20 from Methylacidiphilum infernorum (isolate V4) (Methylokorus infernorum (strain V4)).